A 375-amino-acid chain; its full sequence is MQCALYDAGRCRSCQWITQPIPEQLSAKTVDLKNLLADFPVEEWCAPVSGPEQGFRNKAKMVVSGSVEKPLLGMLHRDGTPEDLCDCPLYPASFAPVFAALKPFIARAGLTPYNVARKRGELKYILLTESQSDGGMMLRFVLRSDTKLAQLRKALPWLQEQLPQLKVITVNIQPVHMAIMEGETEIYLTEQQALAERFNDVPLWIRPQSFFQTNPAVASQLYATARDWVRQLPVKHMWDLFCGVGGFGLHCATPDMQLTGIEIAPEAIACAKQSAAELGLTRLQFQALDSTQFATAQGEVPELVLVNPPRRGIGKPLCDYLSTMAPRFIIYSSCNAQTMAKDIRELPGYRIERVQLFDMFPHTAHYEVLTLLVKQ.

Residues C3, C11, C14, and C87 each contribute to the [4Fe-4S] cluster site. Positions 212, 241, 262, and 307 each coordinate S-adenosyl-L-methionine. C334 acts as the Nucleophile in catalysis.

Belongs to the class I-like SAM-binding methyltransferase superfamily. RNA M5U methyltransferase family. RlmC subfamily.

It carries out the reaction uridine(747) in 23S rRNA + S-adenosyl-L-methionine = 5-methyluridine(747) in 23S rRNA + S-adenosyl-L-homocysteine + H(+). Its function is as follows. Catalyzes the formation of 5-methyl-uridine at position 747 (m5U747) in 23S rRNA. The chain is 23S rRNA (uracil(747)-C(5))-methyltransferase RlmC from Escherichia coli O45:K1 (strain S88 / ExPEC).